The chain runs to 377 residues: Chaperone protein DnaJ (377 aa).

The J domain maps to 5-70 (DYYQILGIPK…EKRSAYDQYG (66 aa)). The CR-type zinc-finger motif lies at 132 to 210 (GIKKEIQIPT…CHGQGRVETY (79 aa)). Zn(2+) is bound by residues C145, C148, C162, C165, C184, C187, C198, and C201. CXXCXGXG motif repeat units lie at residues 145–152 (CKTCYGSG), 162–169 (CSTCHGKG), 184–191 (CPTCHGKG), and 198–205 (CNLCHGQG).

This sequence belongs to the DnaJ family. Homodimer. Zn(2+) serves as cofactor.

The protein localises to the cytoplasm. In terms of biological role, participates actively in the response to hyperosmotic and heat shock by preventing the aggregation of stress-denatured proteins and by disaggregating proteins, also in an autonomous, DnaK-independent fashion. Unfolded proteins bind initially to DnaJ; upon interaction with the DnaJ-bound protein, DnaK hydrolyzes its bound ATP, resulting in the formation of a stable complex. GrpE releases ADP from DnaK; ATP binding to DnaK triggers the release of the substrate protein, thus completing the reaction cycle. Several rounds of ATP-dependent interactions between DnaJ, DnaK and GrpE are required for fully efficient folding. Also involved, together with DnaK and GrpE, in the DNA replication of plasmids through activation of initiation proteins. The polypeptide is Chaperone protein DnaJ (Buchnera aphidicola subsp. Acyrthosiphon pisum (strain 5A)).